The chain runs to 437 residues: UDP-N-acetylmuramate--L-alanine ligase (437 aa).

108–114 contributes to the ATP binding site; sequence GAHGKTS.

It belongs to the MurCDEF family.

It localises to the cytoplasm. It carries out the reaction UDP-N-acetyl-alpha-D-muramate + L-alanine + ATP = UDP-N-acetyl-alpha-D-muramoyl-L-alanine + ADP + phosphate + H(+). Its pathway is cell wall biogenesis; peptidoglycan biosynthesis. Its function is as follows. Cell wall formation. The chain is UDP-N-acetylmuramate--L-alanine ligase from Lysinibacillus sphaericus (strain C3-41).